Here is an 82-residue protein sequence, read N- to C-terminus: MAEPETLPGRWLPECACLAETVSWEQSRLWSRLLCRPHFRHALPGLTGGSASRPSARSARLVRQPRMTLFSLDHRDGVDARC.

As to quaternary structure, forms a complex with cognate toxin MazF8.

Antitoxin component of a type II toxin-antitoxin (TA) system. Its cognate toxin is MazF8. The sequence is that of Antitoxin MazE8 (mazE8) from Mycobacterium tuberculosis (strain ATCC 25618 / H37Rv).